A 139-amino-acid polypeptide reads, in one-letter code: ATP synthase epsilon chain (139 aa).

The protein belongs to the ATPase epsilon chain family. In terms of assembly, F-type ATPases have 2 components, CF(1) - the catalytic core - and CF(0) - the membrane proton channel. CF(1) has five subunits: alpha(3), beta(3), gamma(1), delta(1), epsilon(1). CF(0) has three main subunits: a, b and c.

Its subcellular location is the cell inner membrane. Produces ATP from ADP in the presence of a proton gradient across the membrane. This chain is ATP synthase epsilon chain, found in Salmonella arizonae (strain ATCC BAA-731 / CDC346-86 / RSK2980).